Reading from the N-terminus, the 208-residue chain is MIGRLHGTVAERHPPALLLDVGGVGYELEAPMSTFYALPAGDQAVTLWTHLAVRDDGQALYGFASRAERDLFRVLIRISGVGPKLALALLSGMNAEGLQRCIEREDVATLTRLPGVGRKTAQRLIVELRDRLDGLLPAASGGVPARTGSGEQLDAPAGPQGSREDAVSALVALGYKPAEAGRLVNAVPGANDLPSEELIRRALQAAVR.

The segment at 1 to 64 (MIGRLHGTVA…DDGQALYGFA (64 aa)) is domain I. Residues 65 to 143 (SRAERDLFRV…GLLPAASGGV (79 aa)) are domain II. A disordered region spans residues 139-162 (ASGGVPARTGSGEQLDAPAGPQGS). The interval 144–157 (PARTGSGEQLDAPA) is flexible linker. The tract at residues 158-208 (GPQGSREDAVSALVALGYKPAEAGRLVNAVPGANDLPSEELIRRALQAAVR) is domain III.

It belongs to the RuvA family. As to quaternary structure, homotetramer. Forms an RuvA(8)-RuvB(12)-Holliday junction (HJ) complex. HJ DNA is sandwiched between 2 RuvA tetramers; dsDNA enters through RuvA and exits via RuvB. An RuvB hexamer assembles on each DNA strand where it exits the tetramer. Each RuvB hexamer is contacted by two RuvA subunits (via domain III) on 2 adjacent RuvB subunits; this complex drives branch migration. In the full resolvosome a probable DNA-RuvA(4)-RuvB(12)-RuvC(2) complex forms which resolves the HJ.

It is found in the cytoplasm. Functionally, the RuvA-RuvB-RuvC complex processes Holliday junction (HJ) DNA during genetic recombination and DNA repair, while the RuvA-RuvB complex plays an important role in the rescue of blocked DNA replication forks via replication fork reversal (RFR). RuvA specifically binds to HJ cruciform DNA, conferring on it an open structure. The RuvB hexamer acts as an ATP-dependent pump, pulling dsDNA into and through the RuvAB complex. HJ branch migration allows RuvC to scan DNA until it finds its consensus sequence, where it cleaves and resolves the cruciform DNA. This chain is Holliday junction branch migration complex subunit RuvA, found in Alkalilimnicola ehrlichii (strain ATCC BAA-1101 / DSM 17681 / MLHE-1).